Consider the following 296-residue polypeptide: Haloalkane dehalogenase (296 aa).

The 125-residue stretch at 31–155 folds into the AB hydrolase-1 domain; the sequence is PILFQHGNPT…QDRDLFQAFR (125 aa). Residue Asn-38 coordinates chloride. Asp-108 acts as the Nucleophile in catalysis. Trp-109 contacts chloride. Glu-132 serves as the catalytic Proton donor. Residue His-272 is the Proton acceptor of the active site.

This sequence belongs to the haloalkane dehalogenase family. Type 2 subfamily. In terms of assembly, monomer.

Its subcellular location is the periplasm. The catalysed reaction is 1-haloalkane + H2O = a halide anion + a primary alcohol + H(+). The enzyme catalyses (3R,6R)-1,3,4,6-tetrachlorocyclohexa-1,4-diene + 2 H2O = 2,5-dichlorocyclohexa-2,5-dien-1,4-diol + 2 chloride + 2 H(+). Its pathway is xenobiotic degradation; gamma-hexachlorocyclohexane degradation. Its activity is regulated as follows. Competitively inhibited by the key pollutants 1,2-dichloroethane (1,2-DCE) and 1,2-dichloropropane (1,2-DCP). Its function is as follows. Catalyzes hydrolytic cleavage of carbon-halogen bonds in halogenated aliphatic compounds, leading to the formation of the corresponding primary alcohols, halide ions and protons. Has a broad substrate specificity since not only monochloroalkanes (C3 to C10) but also dichloroalkanes (&gt; C3), bromoalkanes, and chlorinated aliphatic alcohols are good substrates. Shows almost no activity with 1,2-dichloroethane, but very high activity with the brominated analog. Is involved in the degradation of the important environmental pollutant gamma-hexachlorocyclohexane (gamma-HCH or lindane) as it also catalyzes conversion of 1,3,4,6-tetrachloro-1,4-cyclohexadiene (1,4-TCDN) to 2,5-dichloro-2,5-cyclohexadiene-1,4-diol (2,5-DDOL) via the intermediate 2,4,5-trichloro-2,5-cyclohexadiene-1-ol (2,4,5-DNOL). This degradation pathway allows S.japonicum UT26 to grow on gamma-HCH as the sole source of carbon and energy. This is Haloalkane dehalogenase from Sphingobium indicum (strain DSM 16413 / CCM 7287 / MTCC 6362 / UT26 / NBRC 101211 / UT26S) (Sphingobium japonicum).